We begin with the raw amino-acid sequence, 394 residues long: Tubulin-like protein CetZ4 (394 aa).

GTP contacts are provided by residues 10–14 (QAGGK), 110–112 (GTG), glutamate 142, asparagine 169, and asparagine 187.

This sequence belongs to the CetZ family.

It localises to the cytoplasm. Its function is as follows. Involved in cell shape control. The protein is Tubulin-like protein CetZ4 of Haloferax volcanii (strain ATCC 29605 / DSM 3757 / JCM 8879 / NBRC 14742 / NCIMB 2012 / VKM B-1768 / DS2) (Halobacterium volcanii).